A 296-amino-acid polypeptide reads, in one-letter code: Non-homologous end joining protein Ku (296 aa).

The Ku domain occupies 11-187; it reads TFGLVNIPVK…ELPEAGEPSS (177 aa). The disordered stretch occupies residues 254–296; the sequence is AAARRRGDEHEAPARGERRHAAAAAARTTGRPRAARASRKKRG. Positions 258–273 are enriched in basic and acidic residues; that stretch reads RRGDEHEAPARGERRH. A compositionally biased stretch (low complexity) spans 275 to 285; the sequence is AAAAARTTGRP. Positions 286-296 are enriched in basic residues; that stretch reads RAARASRKKRG.

This sequence belongs to the prokaryotic Ku family. In terms of assembly, homodimer. Interacts with LigD.

In terms of biological role, with LigD forms a non-homologous end joining (NHEJ) DNA repair enzyme, which repairs dsDNA breaks with reduced fidelity. Binds linear dsDNA with 5'- and 3'- overhangs but not closed circular dsDNA nor ssDNA. Recruits and stimulates the ligase activity of LigD. In Anaeromyxobacter sp. (strain K), this protein is Non-homologous end joining protein Ku.